Here is a 181-residue protein sequence, read N- to C-terminus: ATP synthase subunit delta (181 aa).

It belongs to the ATPase delta chain family. F-type ATPases have 2 components, F(1) - the catalytic core - and F(0) - the membrane proton channel. F(1) has five subunits: alpha(3), beta(3), gamma(1), delta(1), epsilon(1). F(0) has three main subunits: a(1), b(2) and c(10-14). The alpha and beta chains form an alternating ring which encloses part of the gamma chain. F(1) is attached to F(0) by a central stalk formed by the gamma and epsilon chains, while a peripheral stalk is formed by the delta and b chains.

The protein resides in the cell membrane. Functionally, f(1)F(0) ATP synthase produces ATP from ADP in the presence of a proton or sodium gradient. F-type ATPases consist of two structural domains, F(1) containing the extramembraneous catalytic core and F(0) containing the membrane proton channel, linked together by a central stalk and a peripheral stalk. During catalysis, ATP synthesis in the catalytic domain of F(1) is coupled via a rotary mechanism of the central stalk subunits to proton translocation. In terms of biological role, this protein is part of the stalk that links CF(0) to CF(1). It either transmits conformational changes from CF(0) to CF(1) or is implicated in proton conduction. The chain is ATP synthase subunit delta from Mycoplasmoides gallisepticum (strain R(low / passage 15 / clone 2)) (Mycoplasma gallisepticum).